We begin with the raw amino-acid sequence, 576 residues long: Acetylcholine receptor subunit alpha-like 2 (576 aa).

The N-terminal stretch at 1-21 is a signal peptide; the sequence is MAPGCCTTRPRPIALLAHIWR. Residues 22–261 are Extracellular-facing; the sequence is HCKPLCLLLV…FFNITLRRKT (240 aa). Asparagine 65 carries N-linked (GlcNAc...) asparagine glycosylation. Intrachain disulfides connect cysteine 169-cysteine 183 and cysteine 243-cysteine 244. Residue asparagine 254 is glycosylated (N-linked (GlcNAc...) asparagine). The next 3 helical transmembrane spans lie at 262 to 285, 293 to 311, and 327 to 346; these read LFYT…VFYL, IALC…LLIS, and YLLF…IIIL. The Cytoplasmic portion of the chain corresponds to 347–526; sequence NIHYRKPSTH…WGFVAMVMDR (180 aa). The chain crosses the membrane as a helical span at residues 527–545; sequence LFLWLFMIASLVGTFVILG. N-linked (GlcNAc...) asparagine glycosylation occurs at asparagine 570.

Belongs to the ligand-gated ion channel (TC 1.A.9) family. Acetylcholine receptor (TC 1.A.9.1) subfamily. In terms of tissue distribution, CNS in embryos.

Its subcellular location is the postsynaptic cell membrane. The protein resides in the cell membrane. In terms of biological role, after binding acetylcholine, the AChR responds by an extensive change in conformation that affects all subunits and leads to opening of an ion-conducting channel across the plasma membrane. The sequence is that of Acetylcholine receptor subunit alpha-like 2 (nAChRalpha2) from Drosophila melanogaster (Fruit fly).